A 196-amino-acid chain; its full sequence is UMP-CMP kinase (196 aa).

Gly13–Thr18 contacts ATP. Ser33 carries the phosphoserine modification. Residues Ser33 to Val63 form an NMP region. Arg39 serves as a coordination point for a ribonucleoside 5'-phosphate. Residues Lys43 and Lys55 each carry the N6-acetyllysine modification. Lys61–Val63 contributes to the a ribonucleoside 5'-phosphate binding site. Residue Lys73 forms a Glycyl lysine isopeptide (Lys-Gly) (interchain with G-Cter in SUMO2) linkage. Residue Gly93 to Arg96 coordinates a ribonucleoside 5'-phosphate. Asn100 is a binding site for CMP. At Lys106 the chain carries N6-succinyllysine. Positions Glu133–Asp143 are LID. Position 134 (Arg134) interacts with ATP. A ribonucleoside 5'-phosphate contacts are provided by Arg140 and Arg151. Lys179 lines the ATP pocket. Residue Ser180 is modified to Phosphoserine.

Belongs to the adenylate kinase family. UMP-CMP kinase subfamily. As to quaternary structure, monomer. The cofactor is Mg(2+).

The protein resides in the nucleus. The protein localises to the cytoplasm. The catalysed reaction is CMP + ATP = CDP + ADP. It catalyses the reaction dCMP + ATP = dCDP + ADP. The enzyme catalyses UMP + ATP = UDP + ADP. It carries out the reaction a 2'-deoxyribonucleoside 5'-diphosphate + ATP = a 2'-deoxyribonucleoside 5'-triphosphate + ADP. The catalysed reaction is a ribonucleoside 5'-diphosphate + ATP = a ribonucleoside 5'-triphosphate + ADP. In terms of biological role, catalyzes the phosphorylation of pyrimidine nucleoside monophosphates at the expense of ATP. Plays an important role in de novo pyrimidine nucleotide biosynthesis. Has preference for UMP and CMP as phosphate acceptors. Also displays broad nucleoside diphosphate kinase activity. In Rattus norvegicus (Rat), this protein is UMP-CMP kinase (Cmpk1).